A 559-amino-acid chain; its full sequence is MSAHYTTEPPPTASATLHTTFGPIHIALFANQTPLTCKNFLQHCLDNYYAGTIFHRIVPDFIVQGGDPTGTGSGGTSIYEYPEFEYDPEARDPNEKVVLRDELHSRLRFNRRGLVGMAKSEDGTYGSQFFITLANAERELNGQCTLFGRVEGDSIYNVLKIAEAERVERTERPVYPVKVVSCEVGELGPFAGKLKRRETIATAPAAEEKPAAKKKKKAKGGKTLLSFGGDEGDEDVPLRPSKPKFNPTLVVDAGIPPANDAPKKTSPEAEQQTRKRPRSPSPRRSLSAERKHRPKTPDPLTQLPLPDPESPARSPPQSPPARQSILSRTRAEIENLKASMRRTVATGPADTGRKKSALEAMIPETAIRGRKRPPPGTVNGAGRGSSTNGVTGFSSAAEDETLRMFNAFKAKLESADAKSGPHGKTSISASDTTKYTSQAKSNTEPEDEEAQLCDLHFIANCQSCKSWDDTGTAEEAPDDDDRDWLTHELRFGKDMLGKDLQWKREHPDDVDSLVVIDPREREKEFVGGKRRGLERDRERDRKRERVGDQEWDRRRREKP.

One can recognise a PPIase cyclophilin-type domain in the interval 11–184 (PTASATLHTT…YPVKVVSCEV (174 aa)). Disordered regions lie at residues 201–395 (ATAP…GFSS), 413–449 (ESAD…EDEE), and 518–559 (PRER…REKP). Residues 261–273 (APKKTSPEAEQQT) are compositionally biased toward basic and acidic residues. A compositionally biased stretch (pro residues) spans 305–319 (LPDPESPARSPPQSP). Composition is skewed to polar residues over residues 384–394 (GSSTNGVTGFS) and 425–442 (TSIS…AKSN).

Belongs to the cyclophilin-type PPIase family. CWC27 subfamily. Associated with the spliceosome.

The protein resides in the cytoplasm. It is found in the nucleus. The catalysed reaction is [protein]-peptidylproline (omega=180) = [protein]-peptidylproline (omega=0). Functionally, PPIases accelerate the folding of proteins. It catalyzes the cis-trans isomerization of proline imidic peptide bonds in oligopeptides. Involved in pre-mRNA splicing. The polypeptide is Peptidyl-prolyl isomerase cwc27 (cwc27) (Aspergillus fumigatus (strain ATCC MYA-4609 / CBS 101355 / FGSC A1100 / Af293) (Neosartorya fumigata)).